The following is a 528-amino-acid chain: GMP synthase [glutamine-hydrolyzing] (528 aa).

The 192-residue stretch at 13-204 (AIVILDFGSQ…VNHICGCEQD (192 aa)) folds into the Glutamine amidotransferase type-1 domain. Cys-90 functions as the Nucleophile in the catalytic mechanism. Catalysis depends on residues His-178 and Glu-180. Positions 205–403 (WTTNAFIDEA…LGLPEEIVRR (199 aa)) constitute a GMPS ATP-PPase domain. Residue 232-238 (SGGVDSS) coordinates ATP.

Homodimer.

The catalysed reaction is XMP + L-glutamine + ATP + H2O = GMP + L-glutamate + AMP + diphosphate + 2 H(+). It participates in purine metabolism; GMP biosynthesis; GMP from XMP (L-Gln route): step 1/1. In terms of biological role, catalyzes the synthesis of GMP from XMP. This chain is GMP synthase [glutamine-hydrolyzing], found in Synechococcus sp. (strain CC9902).